The primary structure comprises 250 residues: Small ribosomal subunit protein uS2 (250 aa).

This sequence belongs to the universal ribosomal protein uS2 family.

The protein is Small ribosomal subunit protein uS2 of Polaromonas sp. (strain JS666 / ATCC BAA-500).